A 115-amino-acid polypeptide reads, in one-letter code: Large ribosomal subunit protein bL20 (115 aa).

The protein belongs to the bacterial ribosomal protein bL20 family.

Its function is as follows. Binds directly to 23S ribosomal RNA and is necessary for the in vitro assembly process of the 50S ribosomal subunit. It is not involved in the protein synthesizing functions of that subunit. The chain is Large ribosomal subunit protein bL20 from Synechococcus sp. (strain WH7803).